The chain runs to 239 residues: UDP-2,3-diacylglucosamine hydrolase (239 aa).

The Mn(2+) site is built by aspartate 9, histidine 11, aspartate 42, asparagine 80, and histidine 115. 80-81 provides a ligand contact to substrate; that stretch reads NR. Residues aspartate 123, serine 161, lysine 165, lysine 168, and histidine 196 each coordinate substrate. Positions 196 and 198 each coordinate Mn(2+).

Belongs to the LpxH family. It depends on Mn(2+) as a cofactor.

The protein resides in the cell inner membrane. It catalyses the reaction UDP-2-N,3-O-bis[(3R)-3-hydroxytetradecanoyl]-alpha-D-glucosamine + H2O = 2-N,3-O-bis[(3R)-3-hydroxytetradecanoyl]-alpha-D-glucosaminyl 1-phosphate + UMP + 2 H(+). It participates in glycolipid biosynthesis; lipid IV(A) biosynthesis; lipid IV(A) from (3R)-3-hydroxytetradecanoyl-[acyl-carrier-protein] and UDP-N-acetyl-alpha-D-glucosamine: step 4/6. Hydrolyzes the pyrophosphate bond of UDP-2,3-diacylglucosamine to yield 2,3-diacylglucosamine 1-phosphate (lipid X) and UMP by catalyzing the attack of water at the alpha-P atom. Involved in the biosynthesis of lipid A, a phosphorylated glycolipid that anchors the lipopolysaccharide to the outer membrane of the cell. The sequence is that of UDP-2,3-diacylglucosamine hydrolase from Pasteurella multocida (strain Pm70).